A 116-amino-acid polypeptide reads, in one-letter code: Iron-sulfur cluster assembly protein CyaY (116 aa).

The protein belongs to the frataxin family.

Involved in iron-sulfur (Fe-S) cluster assembly. May act as a regulator of Fe-S biogenesis. In Polaromonas sp. (strain JS666 / ATCC BAA-500), this protein is Iron-sulfur cluster assembly protein CyaY.